A 138-amino-acid polypeptide reads, in one-letter code: Ribosome-binding factor A (138 aa).

This sequence belongs to the RbfA family. As to quaternary structure, monomer. Binds 30S ribosomal subunits, but not 50S ribosomal subunits or 70S ribosomes.

Its subcellular location is the cytoplasm. Functionally, one of several proteins that assist in the late maturation steps of the functional core of the 30S ribosomal subunit. Associates with free 30S ribosomal subunits (but not with 30S subunits that are part of 70S ribosomes or polysomes). Required for efficient processing of 16S rRNA. May interact with the 5'-terminal helix region of 16S rRNA. The protein is Ribosome-binding factor A of Sodalis glossinidius (strain morsitans).